The primary structure comprises 61 residues: Cobrotoxin-b (61 aa).

4 cysteine pairs are disulfide-bonded: C3-C23, C17-C40, C42-C53, and C54-C59.

It belongs to the three-finger toxin family. Short-chain subfamily. Type I alpha-neurotoxin sub-subfamily. Expressed by the venom gland.

The protein localises to the secreted. In terms of biological role, produces peripheral paralysis by blocking neuromuscular transmission at the postsynaptic site. Binds to the nicotinic acetylcholine receptor. This Naja kaouthia (Monocled cobra) protein is Cobrotoxin-b.